The chain runs to 380 residues: 1-deoxy-D-xylulose 5-phosphate reductoisomerase 2 (380 aa).

Residues Ser10, Gly11, Ser12, Ile13, Gly36, Lys37, Asn38, and Asn120 each coordinate NADPH. Lys121 serves as a coordination point for 1-deoxy-D-xylulose 5-phosphate. Glu122 contributes to the NADPH binding site. Residue Asp146 participates in Mn(2+) binding. Residues Ser147, Glu148, Ser172, and His195 each coordinate 1-deoxy-D-xylulose 5-phosphate. Residue Glu148 coordinates Mn(2+). Gly201 contributes to the NADPH binding site. Residues Ser208, Asn213, Lys214, and Glu217 each coordinate 1-deoxy-D-xylulose 5-phosphate. Residue Glu217 coordinates Mn(2+).

The protein belongs to the DXR family. It depends on Mg(2+) as a cofactor. The cofactor is Mn(2+).

The enzyme catalyses 2-C-methyl-D-erythritol 4-phosphate + NADP(+) = 1-deoxy-D-xylulose 5-phosphate + NADPH + H(+). Its pathway is isoprenoid biosynthesis; isopentenyl diphosphate biosynthesis via DXP pathway; isopentenyl diphosphate from 1-deoxy-D-xylulose 5-phosphate: step 1/6. In terms of biological role, catalyzes the NADPH-dependent rearrangement and reduction of 1-deoxy-D-xylulose-5-phosphate (DXP) to 2-C-methyl-D-erythritol 4-phosphate (MEP). This Bacillus anthracis protein is 1-deoxy-D-xylulose 5-phosphate reductoisomerase 2.